We begin with the raw amino-acid sequence, 377 residues long: MREKVVSLAQDLIHRSSISPNDEGCQKIIAERLEKLGFQIEWMPFNDTLNLWAKHGTSEPVIAFAGHTDVVPTGDENQWSSPPFSAEIIDGMLYGRGAADMKGSLAAMIVAAEEYVKANPNHKGIIALLITSDEEAAAKDGTIRVVETLMTRDEKITYCMVGEPSSAKNLGDVVKNGRRGSITGNLYIQGIQGHVAYPHLAENPIHKAALFLQELTTYQWDKGNEFFPPTSLQIANIHAGTGSNNVIPAELYIQFNLRYCTEVTDEIIKQKVAEMLEKHNLKYRIEWNLSGNPFLTKPGKLLDSITSAIEETIGITPKAETGGGTSDGRFIALMGAEVVEFGPLNSTIHKVNECVSVEDLGKCGEIYHKMLVNLLDS.

Residue His-67 participates in Zn(2+) binding. Residue Asp-69 is part of the active site. Asp-100 contributes to the Zn(2+) binding site. The active-site Proton acceptor is the Glu-134. Residues Glu-135, Glu-163, and His-349 each contribute to the Zn(2+) site.

It belongs to the peptidase M20A family. DapE subfamily. As to quaternary structure, homodimer. Zn(2+) serves as cofactor. Requires Co(2+) as cofactor.

The enzyme catalyses N-succinyl-(2S,6S)-2,6-diaminopimelate + H2O = (2S,6S)-2,6-diaminopimelate + succinate. The protein operates within amino-acid biosynthesis; L-lysine biosynthesis via DAP pathway; LL-2,6-diaminopimelate from (S)-tetrahydrodipicolinate (succinylase route): step 3/3. In terms of biological role, catalyzes the hydrolysis of N-succinyl-L,L-diaminopimelic acid (SDAP), forming succinate and LL-2,6-diaminopimelate (DAP), an intermediate involved in the bacterial biosynthesis of lysine and meso-diaminopimelic acid, an essential component of bacterial cell walls. The protein is Succinyl-diaminopimelate desuccinylase of Haemophilus influenzae (strain PittGG).